The primary structure comprises 284 residues: D-tagatose-1,6-bisphosphate aldolase subunit GatY (284 aa).

D82 serves as the catalytic Proton donor. Residues H83 and H180 each contribute to the Zn(2+) site. Dihydroxyacetone phosphate is bound at residue G181. H208 lines the Zn(2+) pocket. Residues 209–211 and 230–233 contribute to the dihydroxyacetone phosphate site; these read GAS and NVAT.

The protein belongs to the class II fructose-bisphosphate aldolase family. TagBP aldolase GatY subfamily. Forms a complex with GatZ. Zn(2+) serves as cofactor.

The catalysed reaction is D-tagatofuranose 1,6-bisphosphate = D-glyceraldehyde 3-phosphate + dihydroxyacetone phosphate. The protein operates within carbohydrate metabolism; D-tagatose 6-phosphate degradation; D-glyceraldehyde 3-phosphate and glycerone phosphate from D-tagatose 6-phosphate: step 2/2. Functionally, catalytic subunit of the tagatose-1,6-bisphosphate aldolase GatYZ, which catalyzes the reversible aldol condensation of dihydroxyacetone phosphate (DHAP or glycerone-phosphate) with glyceraldehyde 3-phosphate (G3P) to produce tagatose 1,6-bisphosphate (TBP). Requires GatZ subunit for full activity and stability. Is involved in the catabolism of galactitol. This Escherichia coli O17:K52:H18 (strain UMN026 / ExPEC) protein is D-tagatose-1,6-bisphosphate aldolase subunit GatY.